We begin with the raw amino-acid sequence, 59 residues long: Small, acid-soluble spore protein H 1 (59 aa).

Belongs to the SspH family.

It localises to the spore core. This is Small, acid-soluble spore protein H 1 (sspH1) from Bacillus anthracis.